Here is a 301-residue protein sequence, read N- to C-terminus: Probable alpha-L-glutamate ligase 1 (301 aa).

In terms of domain architecture, ATP-grasp spans 104 to 287 (LQLLSRKGIG…VTEPIVEYIE (184 aa)). ATP is bound by residues Lys-141, 178 to 179 (EY), Asp-187, and 211 to 213 (RSN). Residues Asp-248, Glu-260, and Asn-262 each coordinate Mg(2+). The Mn(2+) site is built by Asp-248, Glu-260, and Asn-262.

It belongs to the RimK family. It depends on Mg(2+) as a cofactor. Requires Mn(2+) as cofactor.

This is Probable alpha-L-glutamate ligase 1 from Shewanella sp. (strain MR-4).